Reading from the N-terminus, the 367-residue chain is Outer membrane porin C (367 aa).

The signal sequence occupies residues 1–21 (MKVKVLSLLVPALLVAGAANA). Residues 22–33 (AEVYNKDGNKLD) are Periplasmic-facing. Residues 34-42 (LYGKVDGLH) form a beta stranded membrane-spanning segment. Topologically, residues 43–53 (YFSDNKDVDGD) are extracellular. The beta stranded transmembrane segment at 54–63 (QTYMRLGFKG) threads the bilayer. At 64-73 (ETQVTDQLTG) the chain is on the periplasmic side. A beta stranded transmembrane segment spans residues 74 to 84 (YGQWEYQIQGN). The Extracellular segment spans residues 85 to 91 (SAENENN). A beta stranded membrane pass occupies residues 92–101 (SWTRVAFAGL). The Periplasmic segment spans residues 102 to 106 (KFQDV). A beta stranded transmembrane segment spans residues 107-115 (GSFDYGRNY). The tract at residues 116 to 133 (GVVYDVTSWTDVLPEFGG) is loop L3; may constrict the pore. Residues 116–141 (GVVYDVTSWTDVLPEFGGDTYGSDNF) are Extracellular-facing. A beta stranded transmembrane segment spans residues 142–154 (MQQRGNGFATYRN). Over 155 to 163 (TDFFGLVDG) the chain is Periplasmic. Residues 164–171 (LNFAVQYQ) form a beta stranded membrane-spanning segment. Residues 172 to 200 (GKNGNPSGEGFTSGVTNNGRDALRQNGDG) lie on the Extracellular side of the membrane. A beta stranded transmembrane segment spans residues 201 to 207 (VGGSITY). Topologically, residues 208 to 211 (DYEG) are periplasmic. A beta stranded membrane pass occupies residues 212–219 (FGIGGAIS). Residues 220–241 (SSKRTDAQNTAAYIGNGDRAET) lie on the Extracellular side of the membrane. A beta stranded transmembrane segment spans residues 242-248 (YTGGLKY). The Periplasmic portion of the chain corresponds to 249–252 (DANN). The beta stranded transmembrane segment at 253–260 (IYLAAQYT) threads the bilayer. The Extracellular portion of the chain corresponds to 261-269 (QTYNATRVG). A beta stranded transmembrane segment spans residues 270-286 (SLGWANKAQNFEAVAQY). Topologically, residues 287–291 (QFDFG) are periplasmic. A beta stranded membrane pass occupies residues 292 to 299 (LRPSLAYL). The Extracellular portion of the chain corresponds to 300–318 (QSKGKNLGRGYDDEDILKY). The chain crosses the membrane as a beta stranded span at residues 319–326 (VDVGATYY). Over 327-330 (FNKN) the chain is Periplasmic. The beta stranded transmembrane segment at 331–338 (MSTYVDYK) threads the bilayer. At 339 to 358 (INLLDDNQFTRDAGINTDNI) the chain is on the extracellular side. Residues Asn-340, Leu-342, and Thr-355 each contribute to the Mg(2+) site. A beta stranded transmembrane segment spans residues 359 to 366 (VALGLVYQ). Residue Phe-367 is a topological domain, periplasmic.

It belongs to the Gram-negative porin family. Homotrimer. Forms mixed heterotrimers with OmpF and with PhoE; other mixed heterotrimers are also probable.

Its subcellular location is the cell outer membrane. In terms of biological role, forms pores that allow passive diffusion of small molecules across the outer membrane. (Microbial infection) Supports colicin E5 entry in the absence of its major receptor OmpF. Its function is as follows. (Microbial infection) A mixed OmpC-OmpF heterotrimer is the outer membrane receptor for toxin CdiA-EC536; polymorphisms in extracellular loops 4 and 5 of OmpC confer susceptibility to CdiA-EC536-mediated toxicity. This is Outer membrane porin C (ompC) from Escherichia coli (strain K12).